The following is a 132-amino-acid chain: Small ribosomal subunit protein uS8 (132 aa).

Belongs to the universal ribosomal protein uS8 family. In terms of assembly, part of the 30S ribosomal subunit. Contacts proteins S5 and S12.

One of the primary rRNA binding proteins, it binds directly to 16S rRNA central domain where it helps coordinate assembly of the platform of the 30S subunit. In Rhodococcus jostii (strain RHA1), this protein is Small ribosomal subunit protein uS8.